We begin with the raw amino-acid sequence, 302 residues long: Aspartate carbamoyltransferase catalytic subunit (302 aa).

Positions 51 and 52 each coordinate carbamoyl phosphate. Lys-80 provides a ligand contact to L-aspartate. The carbamoyl phosphate site is built by Arg-101, His-129, and Gln-132. Residues Arg-162 and Arg-223 each contribute to the L-aspartate site. Carbamoyl phosphate contacts are provided by Leu-261 and Pro-262.

Belongs to the aspartate/ornithine carbamoyltransferase superfamily. ATCase family. In terms of assembly, heterododecamer (2C3:3R2) of six catalytic PyrB chains organized as two trimers (C3), and six regulatory PyrI chains organized as three dimers (R2).

It carries out the reaction carbamoyl phosphate + L-aspartate = N-carbamoyl-L-aspartate + phosphate + H(+). The protein operates within pyrimidine metabolism; UMP biosynthesis via de novo pathway; (S)-dihydroorotate from bicarbonate: step 2/3. Its function is as follows. Catalyzes the condensation of carbamoyl phosphate and aspartate to form carbamoyl aspartate and inorganic phosphate, the committed step in the de novo pyrimidine nucleotide biosynthesis pathway. In Chromobacterium violaceum (strain ATCC 12472 / DSM 30191 / JCM 1249 / CCUG 213 / NBRC 12614 / NCIMB 9131 / NCTC 9757 / MK), this protein is Aspartate carbamoyltransferase catalytic subunit.